We begin with the raw amino-acid sequence, 828 residues long: Leucine--tRNA ligase (828 aa).

The 'HIGH' region signature appears at 42–52 (PYPSGTLHVGH). Positions 582 to 586 (KMSKS) match the 'KMSKS' region motif. Lys-585 lines the ATP pocket.

Belongs to the class-I aminoacyl-tRNA synthetase family.

The protein resides in the cytoplasm. It catalyses the reaction tRNA(Leu) + L-leucine + ATP = L-leucyl-tRNA(Leu) + AMP + diphosphate. The polypeptide is Leucine--tRNA ligase (Petrotoga mobilis (strain DSM 10674 / SJ95)).